The following is a 238-amino-acid chain: Ribonuclease PH (238 aa).

Phosphate is bound by residues Arg-86 and 124 to 126 (GTR).

The protein belongs to the RNase PH family. In terms of assembly, homohexameric ring arranged as a trimer of dimers.

It catalyses the reaction tRNA(n+1) + phosphate = tRNA(n) + a ribonucleoside 5'-diphosphate. Its function is as follows. Phosphorolytic 3'-5' exoribonuclease that plays an important role in tRNA 3'-end maturation. Removes nucleotide residues following the 3'-CCA terminus of tRNAs; can also add nucleotides to the ends of RNA molecules by using nucleoside diphosphates as substrates, but this may not be physiologically important. Probably plays a role in initiation of 16S rRNA degradation (leading to ribosome degradation) during starvation. The chain is Ribonuclease PH from Haemophilus influenzae (strain PittGG).